A 77-amino-acid polypeptide reads, in one-letter code: uncharacterized protein (77 aa).

Positions 13-67 constitute an HTH cro/C1-type domain; it reads VLQYMVNNDYSLNQLALEIGVSPATLSRVLNGERRPGQLVIGKMLHYFNLKFEDL. The segment at residues 24 to 43 is a DNA-binding region (H-T-H motif); that stretch reads LNQLALEIGVSPATLSRVLN.

The protein localises to the cytoplasm. This is an uncharacterized protein from Bacillus subtilis (strain 168).